The following is a 1319-amino-acid chain: DNA-directed RNA polymerase subunit beta' (1319 aa).

Zn(2+) contacts are provided by cysteine 59, cysteine 61, cysteine 74, and cysteine 77. Residues aspartate 449, aspartate 451, and aspartate 453 each coordinate Mg(2+). Residues cysteine 773, cysteine 846, cysteine 853, and cysteine 856 each coordinate Zn(2+).

Belongs to the RNA polymerase beta' chain family. As to quaternary structure, the RNAP catalytic core consists of 2 alpha, 1 beta, 1 beta' and 1 omega subunit. When a sigma factor is associated with the core the holoenzyme is formed, which can initiate transcription. It depends on Mg(2+) as a cofactor. The cofactor is Zn(2+).

The catalysed reaction is RNA(n) + a ribonucleoside 5'-triphosphate = RNA(n+1) + diphosphate. In terms of biological role, DNA-dependent RNA polymerase catalyzes the transcription of DNA into RNA using the four ribonucleoside triphosphates as substrates. The chain is DNA-directed RNA polymerase subunit beta' from Fusobacterium nucleatum subsp. nucleatum (strain ATCC 25586 / DSM 15643 / BCRC 10681 / CIP 101130 / JCM 8532 / KCTC 2640 / LMG 13131 / VPI 4355).